We begin with the raw amino-acid sequence, 89 residues long: Small ribosomal subunit protein uS15 (89 aa).

Belongs to the universal ribosomal protein uS15 family. Part of the 30S ribosomal subunit. Forms a bridge to the 50S subunit in the 70S ribosome, contacting the 23S rRNA.

Functionally, one of the primary rRNA binding proteins, it binds directly to 16S rRNA where it helps nucleate assembly of the platform of the 30S subunit by binding and bridging several RNA helices of the 16S rRNA. Its function is as follows. Forms an intersubunit bridge (bridge B4) with the 23S rRNA of the 50S subunit in the ribosome. The sequence is that of Small ribosomal subunit protein uS15 from Chlorobaculum parvum (strain DSM 263 / NCIMB 8327) (Chlorobium vibrioforme subsp. thiosulfatophilum).